Consider the following 446-residue polypeptide: Citrate/sodium symporter (446 aa).

5 helical membrane-spanning segments follow: residues 23-43 (IFGM…LSHF), 46-66 (AIPT…AIFG), 79-99 (IGGA…AGIF), 110-130 (VMDK…GAIL), and 148-168 (ILAG…CFGI). 2 residues coordinate Na(+): I181 and G183. Citrate contacts are provided by N186 and G187. 5 helical membrane-spanning segments follow: residues 213–233 (IAIL…LDMI), 267–287 (ETAV…VVAK), 289–309 (ILPS…LIVA), 335–355 (QLLW…QEII), and 364–384 (VIAA…GWLI). Na(+)-binding residues include M399 and N401. Positions 402, 404, 405, and 428 each coordinate citrate. The helical transmembrane segment at 425–445 (ISSRLGGGIVLVIASIVFSMM) threads the bilayer.

Belongs to the 2-hydroxycarboxylate transporter (2-HCT) (TC 2.A.24) family. As to quaternary structure, homodimer.

The protein localises to the cell inner membrane. The catalysed reaction is citrate(out) + 2 Na(+)(out) = citrate(in) + 2 Na(+)(in). Secondary active transporter that catalyzes the uptake of citrate across the membrane with the concomitant uptake of sodium. Is specific for citrate. The protein is Citrate/sodium symporter of Salmonella dublin.